The sequence spans 602 residues: Non structural protein VP9' (602 aa).

The protein localises to the host cytoplasm. The polypeptide is Non structural protein VP9' (Callospermophilus lateralis (Golden-mantled ground squirrel)).